Consider the following 801-residue polypeptide: Probable phosphoketolase (801 aa).

Belongs to the XFP family. Thiamine diphosphate is required as a cofactor.

In Bradyrhizobium diazoefficiens (strain JCM 10833 / BCRC 13528 / IAM 13628 / NBRC 14792 / USDA 110), this protein is Probable phosphoketolase.